A 706-amino-acid chain; its full sequence is Translation factor GUF1 homolog, mitochondrial (706 aa).

Residues 89–272 (SRIRNFSIIA…SIVKNVPPPQ (184 aa)) enclose the tr-type G domain. GTP-binding positions include 98-105 (AHIDHGKS), 165-169 (DTPGH), and 219-222 (NKID).

The protein belongs to the TRAFAC class translation factor GTPase superfamily. Classic translation factor GTPase family. LepA subfamily.

It is found in the mitochondrion inner membrane. The enzyme catalyses GTP + H2O = GDP + phosphate + H(+). Its function is as follows. Promotes mitochondrial protein synthesis. May act as a fidelity factor of the translation reaction, by catalyzing a one-codon backward translocation of tRNAs on improperly translocated ribosomes. Binds to mitochondrial ribosomes in a GTP-dependent manner. The chain is Translation factor GUF1 homolog, mitochondrial from Thalassiosira pseudonana (Marine diatom).